The following is a 342-amino-acid chain: Biotin synthase (342 aa).

Positions Asn36–Ser260 constitute a Radical SAM core domain. The [4Fe-4S] cluster site is built by Cys51, Cys55, and Cys58. Residues Cys95, Cys126, Cys186, and Arg258 each contribute to the [2Fe-2S] cluster site.

This sequence belongs to the radical SAM superfamily. Biotin synthase family. In terms of assembly, homodimer. [4Fe-4S] cluster is required as a cofactor. [2Fe-2S] cluster serves as cofactor.

The enzyme catalyses (4R,5S)-dethiobiotin + (sulfur carrier)-SH + 2 reduced [2Fe-2S]-[ferredoxin] + 2 S-adenosyl-L-methionine = (sulfur carrier)-H + biotin + 2 5'-deoxyadenosine + 2 L-methionine + 2 oxidized [2Fe-2S]-[ferredoxin]. Its pathway is cofactor biosynthesis; biotin biosynthesis; biotin from 7,8-diaminononanoate: step 2/2. Its function is as follows. Catalyzes the conversion of dethiobiotin (DTB) to biotin by the insertion of a sulfur atom into dethiobiotin via a radical-based mechanism. The sequence is that of Biotin synthase from Buchnera aphidicola subsp. Schizaphis graminum (strain Sg).